We begin with the raw amino-acid sequence, 272 residues long: MDTFAVFGNPINHSRSPRIHALFVAETGITHPYGRVLAPLDGFEQTLRQFFDAGGLGANITLPFKERAFSLCDQLTERGALAGAVNTIKKQPDGSLLGDNTDGIGLVSDLQRLDLLRQDSRVLLVGVGGAARGVVLPLLAYGCKVVLTNRTFPRAQKLVGFYHHVGDISALPLERLGTPDYDLIINATSTGVQGSIPPLPASLITSSVCCYDMYYQQGDTPFITWCRRQGSLRCADGLGMLVGQAASSFLLWHGVLPSVLPVLETLRAELSA.

Residues 14–16 (SRS) and Thr-61 contribute to the shikimate site. The active-site Proton acceptor is the Lys-65. Glu-77 lines the NADP(+) pocket. Asn-86 and Asp-102 together coordinate shikimate. NADP(+) contacts are provided by residues 126–130 (GVGGA), 149–154 (NRTFPR), and Met-213. Tyr-215 provides a ligand contact to shikimate. Position 237 (Gly-237) interacts with NADP(+).

Belongs to the shikimate dehydrogenase family. Homodimer.

It catalyses the reaction shikimate + NADP(+) = 3-dehydroshikimate + NADPH + H(+). It participates in metabolic intermediate biosynthesis; chorismate biosynthesis; chorismate from D-erythrose 4-phosphate and phosphoenolpyruvate: step 4/7. In terms of biological role, involved in the biosynthesis of the chorismate, which leads to the biosynthesis of aromatic amino acids. Catalyzes the reversible NADPH linked reduction of 3-dehydroshikimate (DHSA) to yield shikimate (SA). The chain is Shikimate dehydrogenase (NADP(+)) from Sodalis glossinidius (strain morsitans).